Consider the following 517-residue polypeptide: Crotonobetaine/carnitine--CoA ligase (517 aa).

The protein belongs to the ATP-dependent AMP-binding enzyme family.

It carries out the reaction 4-(trimethylamino)butanoate + ATP + CoA = 4-(trimethylamino)butanoyl-CoA + AMP + diphosphate. The catalysed reaction is crotonobetaine + ATP + CoA = crotonobetainyl-CoA + AMP + diphosphate. It catalyses the reaction (R)-carnitine + ATP + CoA = (R)-carnitinyl-CoA + AMP + diphosphate. The protein operates within amine and polyamine metabolism; carnitine metabolism. In terms of biological role, catalyzes the transfer of CoA to carnitine, generating the initial carnitinyl-CoA needed for the CaiB reaction cycle. Also has activity toward crotonobetaine and gamma-butyrobetaine. This Escherichia coli O7:K1 (strain IAI39 / ExPEC) protein is Crotonobetaine/carnitine--CoA ligase.